The following is a 428-amino-acid chain: UPF0229 protein YeaH (428 aa).

Residues 78 to 90 (GNDHFIQNDRIER) are compositionally biased toward basic and acidic residues. The disordered stretch occupies residues 78–111 (GNDHFIQNDRIERPQGGGGGGSGSGQGQASQDGE). The span at 92-103 (QGGGGGGSGSGQ) shows a compositional bias: gly residues.

The protein belongs to the UPF0229 family.

This Salmonella choleraesuis (strain SC-B67) protein is UPF0229 protein YeaH.